The sequence spans 232 residues: Phospholipase A2 hemilipin (232 aa).

Residues 1-18 form the signal peptide; sequence MTFLILTILATVTPSLYS. Residues 19–105 constitute a propeptide that is removed on maturation; it reads HVVQRELRVN…QRCSGSAEGR (87 aa). The Ca(2+) site is built by Trp115, Gly117, and Gly119. 5 disulfide bridges follow: Cys116/Cys137, Cys136/Cys175, Cys143/Cys168, Cys166/Cys206, and Cys211/Cys219. A glycan (N-linked (GlcNAc...) asparagine) is linked at Asn124. His140 is a catalytic residue. Position 141 (Asp141) interacts with Ca(2+). The N-linked (GlcNAc...) asparagine glycan is linked to Asn157. A propeptide spanning residues 214–217 is cleaved from the precursor; sequence KRDA.

It belongs to the phospholipase A2 family. Group III subfamily. Heterodimer composed of a small subunit and a large subunit; disulfid-linked. It depends on Ca(2+) as a cofactor. Expressed by the venom gland.

The protein resides in the secreted. It catalyses the reaction a 1,2-diacyl-sn-glycero-3-phosphocholine + H2O = a 1-acyl-sn-glycero-3-phosphocholine + a fatty acid + H(+). Scorpion venom phospholipase A2 (PLA2) that shows high hydrolytic activities towards lecithin and acts as an effective blocker of all angiogenesis key steps in vivo and in vitro. It has no effect on apoptosis and does not display hemolytic, inflammatory or neurotoxic effects. PLA2 catalyzes the calcium-dependent hydrolysis of the 2-acyl groups in 3-sn-phosphoglycerides. This chain is Phospholipase A2 hemilipin, found in Hemiscorpius lepturus (Scorpion).